Consider the following 581-residue polypeptide: Frizzled-8 (581 aa).

The first 23 residues, 1-23 (MESLSLSLLLLVSWLQGSQCAAA), serve as a signal peptide directing secretion. In terms of domain architecture, FZ spans 24–144 (KELSCQEITV…GNPDTLCMDY (121 aa)). Topologically, residues 24–239 (KELSCQEITV…PEERTFTEFW (216 aa)) are extracellular. 5 disulfide bridges follow: Cys28–Cys89, Cys36–Cys82, Cys73–Cys111, Cys100–Cys141, and Cys104–Cys128. N-linked (GlcNAc...) asparagine glycosylation occurs at Asn42. 64-71 (QFWPLVVI) lines the hexadecanoate pocket. The segment at 88–93 (ICLEDY) is wnt-binding. Residues 140–146 (LCMDYYN) are wnt-binding. Asn146 carries an N-linked (GlcNAc...) asparagine glycan. The tract at residues 151–189 (TTAAPSHPEPPKPPARSVPKGRTRVEPPRSRSRATGCES) is disordered. Residues 157–166 (HPEPPKPPAR) show a composition bias toward pro residues. A helical transmembrane segment spans residues 240–260 (IGLWSVLCFASTFATVSTFLI). Residues 261–271 (DMERFKYPERP) lie on the Cytoplasmic side of the membrane. The chain crosses the membrane as a helical span at residues 272-292 (IIFLSACYLLVSTGYLIRLIA). Over 293 to 320 (GHEKVACSRGELDLEHIIHYETTGPALC) the chain is Extracellular. Residues 321–341 (TLVFLLIYFFGMASSIWWVIL) traverse the membrane as a helical segment. Over 342–377 (SLTWFLAAGMKWGNEAIAGYSQYFHLAAWLVPSIKS) the chain is Cytoplasmic. The chain crosses the membrane as a helical span at residues 378–398 (IAVLALSSVDGDPVAGICFVG). Residues 399–407 (NQNLDNLRG) lie on the Extracellular side of the membrane. The chain crosses the membrane as a helical span at residues 408–428 (FVLAPLVIYLFIGSMFLLAGF). Residues 429 to 454 (VSLFRIRSVIKQGGTKTDKLEKLMIR) lie on the Cytoplasmic side of the membrane. A helical transmembrane segment spans residues 455 to 475 (IGIFSVLYTVPATIVVACFFY). Over 476-505 (EQHNRQGWEVAHNCNSCQPEMAQPHRPDYA) the chain is Extracellular. Residues 506 to 526 (VFMLKYFMCLVVGITSGVWIW) form a helical membrane-spanning segment. At 527–581 (SGKTLESWRAFCTRCCWGSKATGGSMYSDVSTGLTWRSGTGSSVSCPKQMPLSQV) the chain is on the cytoplasmic side. Residues 529-534 (KTLESW) carry the Lys-Thr-X-X-X-Trp motif, mediates interaction with the PDZ domain of Dvl family members motif. Residues 579-581 (SQV) carry the PDZ-binding motif.

This sequence belongs to the G-protein coupled receptor Fz/Smo family. As to quaternary structure, interacts with lypd6 and the interaction is strongly enhanced by wnt3a.

The protein localises to the membrane. Its subcellular location is the cell membrane. Receptor for Wnt proteins. Most of frizzled receptors are coupled to the beta-catenin canonical signaling pathway, which leads to the activation of disheveled proteins, inhibition of GSK-3 kinase, nuclear accumulation of beta-catenin and activation of Wnt target genes. A second signaling pathway involving PKC and calcium fluxes has been seen for some family members, but it is not yet clear if it represents a distinct pathway or if it can be integrated in the canonical pathway, as PKC seems to be required for Wnt-mediated inactivation of GSK-3 kinase. Both pathways seem to involve interactions with G-proteins. May be involved in transduction and intercellular transmission of polarity information during tissue morphogenesis and/or in differentiated tissues. Activation by Wnt8, Wnt5A or Wnt3A induces expression of beta-catenin target genes. Displays an axis-inducing activity. The protein is Frizzled-8 (fzd8) of Xenopus laevis (African clawed frog).